A 956-amino-acid polypeptide reads, in one-letter code: Endogenous retrovirus group K member 8 Pol protein (956 aa).

One can recognise a Reverse transcriptase domain in the interval 57–245 (LEKGHIEPSF…TPFHYLGMQI (189 aa)). The LPQG signature appears at 161–164 (LPQG). A YXDD motif is present at residues 195-198 (YIDD). Residues 460–590 (LENALTVFTD…ADLLVSSALI (131 aa)) form the RNase H type-1 domain. Mg(2+)-binding residues include aspartate 469, glutamate 497, aspartate 517, and aspartate 582. The Integrase-type zinc finger occupies 587 to 628 (SALIKAQELHALTHVNAAGLKNKFDVTWKQAKDIVQHCTQCQ). 4 residues coordinate Zn(2+): histidine 596, histidine 600, cysteine 624, and cysteine 627. Positions 642–803 (RGLCPNALWQ…TSAEQHLTGK (162 aa)) constitute an Integrase catalytic domain. The integrase-type DNA-binding region spans 811 to 859 (KLIWWKDNKNKTWEIGKVITWGRGFACVSPGENQLPVWIPTRHLKFYNE). The segment at 864-890 (AKKSTSAETETPQSSTVDSQDEQNGDV) is disordered. Over residues 869 to 881 (SAETETPQSSTVD) the composition is skewed to polar residues.

The protein belongs to the beta type-B retroviral polymerase family. HERV class-II K(HML-2) pol subfamily.

The enzyme catalyses DNA(n) + a 2'-deoxyribonucleoside 5'-triphosphate = DNA(n+1) + diphosphate. It carries out the reaction Endonucleolytic cleavage to 5'-phosphomonoester.. Functionally, early post-infection, the reverse transcriptase converts the viral RNA genome into double-stranded viral DNA. The RNase H domain of the reverse transcriptase performs two functions. It degrades the RNA template and specifically removes the RNA primer from the RNA/DNA hybrid. Following nuclear import, the integrase catalyzes the insertion of the linear, double-stranded viral DNA into the host cell chromosome. Endogenous Pol proteins may have kept, lost or modified their original function during evolution. The polypeptide is Endogenous retrovirus group K member 8 Pol protein (ERVK-8) (Homo sapiens (Human)).